We begin with the raw amino-acid sequence, 119 residues long: uncharacterized protein (119 aa).

A disordered region spans residues 64–119 (SAPLGLKEVQKKSNEGLNEVQGAADINKQKRPANSQDSSSVEGDIQNFLEKVTGKN). A compositionally biased stretch (polar residues) spans 95-104 (PANSQDSSSV).

This is an uncharacterized protein from Nostoc sp. (strain PCC 7120 / SAG 25.82 / UTEX 2576).